Consider the following 192-residue polypeptide: NOP protein chaperone 1 (192 aa).

Residues 1-26 (MEVSGESHSGPSCSSSSRDGSGVSVS) are compositionally biased toward low complexity. The disordered stretch occupies residues 1–39 (MEVSGESHSGPSCSSSSRDGSGVSVSKELLMAGSGGRGG). Phosphoserine occurs at positions 34 and 66. The interval 118–192 (FEMNQSHSKE…SENKEKQENK (75 aa)) is disordered. Positions 129-152 (DSSEENSQDSSEESSESEDEDDST) are enriched in acidic residues. A compositionally biased stretch (basic and acidic residues) spans 164 to 177 (KLPHSEDGKGKIEV). At Ser180 the chain carries Phosphoserine.

As to quaternary structure, interacts with NOP58, RUVBL1 and RUVBL2; the interactions are direct and NOPCHAP1 bridges the association of NOP58 with RUVBL1:RUVBL2 even in absence of snoRNAs. The interactions with RUVBL1 and RUVBL2 are disrupted upon ATP binding.

The protein localises to the nucleus. Its function is as follows. Client-loading PAQosome/R2TP complex cofactor that selects NOP58 to promote box C/D small nucleolar ribonucleoprotein (snoRNP) assembly. Acts as a bridge between NOP58 and the R2TP complex via RUVBL1:RUVBL2. The polypeptide is NOP protein chaperone 1 (NOPCHAP1) (Bos taurus (Bovine)).